The primary structure comprises 182 residues: Ribosome-recycling factor (182 aa).

The protein belongs to the RRF family.

It localises to the cytoplasm. Responsible for the release of ribosomes from messenger RNA at the termination of protein biosynthesis. May increase the efficiency of translation by recycling ribosomes from one round of translation to another. The polypeptide is Ribosome-recycling factor (Prochlorococcus marinus (strain MIT 9215)).